A 455-amino-acid polypeptide reads, in one-letter code: MSTRRIFGLETEYGITCAAPPGQQGLSADEVARYLFRKVVAWGRSSNVFLRNGSRLYLDVGSHPEYATAECDDIRQLITYDRGGERILEGLVADAQQRLELEGVPGTIHLFKNNTDSAGNSYGCHENYLVRRQGDFTRLADILVPFLITRQVLTGAGKILTTPAGATFCLSQRADHIWESVSSATTRSRPIINTRDEPHADAELYRRLHVIVGDSSMAEPTAMLKVGATDMVLRMIEAGVPMRDMALENPMRAIREISHDMTGKAPITLASGRTVTAVDLQQEYLVKVRDFVESTGEVSDTDRKVFDLWERGLLALQSGDLTSVERELDWVIKHRLVRRYQEKHSLELSDPRIARLDLAYHDISRTEGLYNLLAARGLVERVTSDVEVLESTAVPPQTTRARLRGEFVRRAQEAKRDYTVDWVHLKLNDQAQRTVLCKDPFQSVDERVDRLIESM.

Glu-10 lines the Mg(2+) pocket. An ATP-binding site is contributed by Arg-55. Tyr-57 is a binding site for Mg(2+). Asp-59 acts as the Proton acceptor in catalysis. Residue Glu-65 participates in Mg(2+) binding. Thr-68 and Trp-422 together coordinate ATP.

The protein belongs to the Pup ligase/Pup deamidase family. Pup-conjugating enzyme subfamily.

The enzyme catalyses ATP + [prokaryotic ubiquitin-like protein]-L-glutamate + [protein]-L-lysine = ADP + phosphate + N(6)-([prokaryotic ubiquitin-like protein]-gamma-L-glutamyl)-[protein]-L-lysine.. It participates in protein degradation; proteasomal Pup-dependent pathway. Its pathway is protein modification; protein pupylation. In terms of biological role, catalyzes the covalent attachment of the prokaryotic ubiquitin-like protein modifier Pup to the proteasomal substrate proteins, thereby targeting them for proteasomal degradation. This tagging system is termed pupylation. The ligation reaction involves the side-chain carboxylate of the C-terminal glutamate of Pup and the side-chain amino group of a substrate lysine. In Sanguibacter keddieii (strain ATCC 51767 / DSM 10542 / NCFB 3025 / ST-74), this protein is Pup--protein ligase.